The primary structure comprises 294 residues: tRNA dimethylallyltransferase (294 aa).

Residue 10-17 (GPTAVGKT) coordinates ATP. 12–17 (TAVGKT) is a substrate binding site. The interval 35–38 (DSQQ) is interaction with substrate tRNA.

This sequence belongs to the IPP transferase family. In terms of assembly, monomer. It depends on Mg(2+) as a cofactor.

The enzyme catalyses adenosine(37) in tRNA + dimethylallyl diphosphate = N(6)-dimethylallyladenosine(37) in tRNA + diphosphate. Functionally, catalyzes the transfer of a dimethylallyl group onto the adenine at position 37 in tRNAs that read codons beginning with uridine, leading to the formation of N6-(dimethylallyl)adenosine (i(6)A). In Streptococcus pneumoniae (strain Hungary19A-6), this protein is tRNA dimethylallyltransferase.